The following is a 192-amino-acid chain: Adenylate kinase (192 aa).

Residue 10 to 18 (GVPGVGSTT) participates in ATP binding.

This sequence belongs to the archaeal adenylate kinase family. In terms of assembly, monomer.

The protein resides in the cytoplasm. The catalysed reaction is AMP + ATP = 2 ADP. This Methanococcus vannielii (strain ATCC 35089 / DSM 1224 / JCM 13029 / OCM 148 / SB) protein is Adenylate kinase.